The primary structure comprises 214 residues: Threonylcarbamoyl-AMP synthase (214 aa).

The YrdC-like domain occupies 9–214; that stretch reads TDSTIQAATW…GDALTGQVIR (206 aa).

The protein belongs to the SUA5 family. TsaC subfamily.

It is found in the cytoplasm. It carries out the reaction L-threonine + hydrogencarbonate + ATP = L-threonylcarbamoyladenylate + diphosphate + H2O. Required for the formation of a threonylcarbamoyl group on adenosine at position 37 (t(6)A37) in tRNAs that read codons beginning with adenine. Catalyzes the conversion of L-threonine, HCO(3)(-)/CO(2) and ATP to give threonylcarbamoyl-AMP (TC-AMP) as the acyladenylate intermediate, with the release of diphosphate. The polypeptide is Threonylcarbamoyl-AMP synthase (Psychrobacter cryohalolentis (strain ATCC BAA-1226 / DSM 17306 / VKM B-2378 / K5)).